The chain runs to 260 residues: Enoyl-[acyl-carrier-protein] reductase [NADH] FabI (260 aa).

NAD(+)-binding positions include G15, 21–22 (SI), Q42, 66–67 (DV), and M94. A97 contributes to the substrate binding site. Catalysis depends on proton acceptor residues Y147 and Y157. NAD(+) contacts are provided by residues K164 and 193 to 197 (IKTLA).

It belongs to the short-chain dehydrogenases/reductases (SDR) family. FabI subfamily. As to quaternary structure, homotetramer.

The enzyme catalyses a 2,3-saturated acyl-[ACP] + NAD(+) = a (2E)-enoyl-[ACP] + NADH + H(+). It functions in the pathway lipid metabolism; fatty acid biosynthesis. Functionally, catalyzes the reduction of a carbon-carbon double bond in an enoyl moiety that is covalently linked to an acyl carrier protein (ACP). Involved in the elongation cycle of fatty acid which are used in the lipid metabolism. This chain is Enoyl-[acyl-carrier-protein] reductase [NADH] FabI (fabI), found in Rickettsia conorii (strain ATCC VR-613 / Malish 7).